A 253-amino-acid chain; its full sequence is uncharacterized protein (253 aa).

The NADP(+) site is built by Ile-17, Ser-36, Asp-62, Asn-89, Tyr-158, Lys-162, Val-191, and Thr-193. The active-site Proton donor is the Tyr-158. Lys-162 serves as the catalytic Lowers pKa of active site Tyr.

This sequence belongs to the short-chain dehydrogenases/reductases (SDR) family.

Its subcellular location is the cytoplasm. The protein localises to the nucleus. This is an uncharacterized protein from Schizosaccharomyces pombe (strain 972 / ATCC 24843) (Fission yeast).